A 190-amino-acid chain; its full sequence is Vascular endothelial growth factor A (190 aa).

Positions 1–26 (MNFLLSWVHWSLALLLYLHHAKWSQA) are cleaved as a signal peptide. Disulfide bonds link cysteine 51–cysteine 93, cysteine 82–cysteine 127, and cysteine 86–cysteine 129. An N-linked (GlcNAc...) asparagine glycan is attached at asparagine 100.

This sequence belongs to the PDGF/VEGF growth factor family. As to quaternary structure, homodimer; disulfide-linked. Also found as heterodimer with PGF. Interacts with NRP1. Interacts with BSG. Interacts with CD82; this interaction inhibits VEGFA-mediated signaling pathway.

It is found in the secreted. Growth factor active in angiogenesis, vasculogenesis and endothelial cell growth. Induces endothelial cell proliferation, promotes cell migration, inhibits apoptosis and induces permeabilization of blood vessels. Binds to the FLT1/VEGFR1 and KDR/VEGFR2 receptors, heparan sulfate and heparin. Binding to NRP1 receptor initiates a signaling pathway needed for motor neuron axon guidance and cell body migration, including for the caudal migration of facial motor neurons from rhombomere 4 to rhombomere 6 during embryonic development. Also binds the DEAR/FBXW7-AS1 receptor. This Bos taurus (Bovine) protein is Vascular endothelial growth factor A (VEGFA).